Reading from the N-terminus, the 595-residue chain is Protein halfway (595 aa).

2 disordered regions span residues 1–42 (MLLT…ADDE) and 64–98 (TGAA…PLLP). Asparagine 250 and asparagine 255 each carry an N-linked (GlcNAc...) asparagine glycan. In terms of domain architecture, LRRNT spans 347–402 (ESTKRCMTKCPVIPNYGSCKCRFESIMIIQDDQSKPKCHVDCSNLGLVELPPRLPD). LRR repeat units lie at residues 403–424 (NTFV…FQTN), 429–450 (NINR…EGTK), and 454–475 (NFQR…FLNN). Residues 489-538 (NKLQCDCNSAKTLQNWLKERSTDIPDYMEIRCRNIPQSVIELQEAKLCQS) enclose the LRRCT domain.

Functionally, has a role in the ecdysone induced cascade; probably indirect control of 'late' ecdysone genes. The sequence is that of Protein halfway (hfw) from Drosophila pseudoobscura pseudoobscura (Fruit fly).